Here is a 183-residue protein sequence, read N- to C-terminus: Phosphopantetheine adenylyltransferase (183 aa).

Thr13 contacts substrate. Residues 13–14 (TF) and His21 each bind ATP. Substrate contacts are provided by Lys45, Leu81, and Arg95. ATP contacts are provided by residues 96-98 (GLR), Glu106, and 131-137 (HQFISSR).

The protein belongs to the bacterial CoaD family. Homohexamer. The cofactor is Mg(2+).

The protein resides in the cytoplasm. It catalyses the reaction (R)-4'-phosphopantetheine + ATP + H(+) = 3'-dephospho-CoA + diphosphate. The protein operates within cofactor biosynthesis; coenzyme A biosynthesis; CoA from (R)-pantothenate: step 4/5. Reversibly transfers an adenylyl group from ATP to 4'-phosphopantetheine, yielding dephospho-CoA (dPCoA) and pyrophosphate. This chain is Phosphopantetheine adenylyltransferase, found in Rhodospirillum centenum (strain ATCC 51521 / SW).